Here is a 385-residue protein sequence, read N- to C-terminus: Isomaltose glucohydrolase (385 aa).

Trp-125 is a binding site for substrate. The active-site Proton acceptor is the Asp-175. Glu-178 acts as the Proton donor in catalysis. The active-site Proton acceptor is the Glu-335.

The protein belongs to the glycosyl hydrolase 15 family.

It localises to the cytoplasm. The catalysed reaction is isomaltose + H2O = beta-D-glucose + D-glucose. Its function is as follows. Involved in the intracellular degradation of the cyclic tetrasaccharide cyclobis-(1-6)-alpha-nigerosyl (CNN) formed extracellularly from starch. Catalyzes the hydrolysis of alpha-1,6-glucosidic linkage from the non-reducing end of isomaltose to yield beta-D-glucose and D-glucose. Can also act on panose and isomaltotriose at a lower rate. It displays low or no activity toward CNN and the general GH15 enzyme substrates such as maltose, soluble starch or dextran. The protein is Isomaltose glucohydrolase of Kribbella flavida (strain DSM 17836 / JCM 10339 / NBRC 14399).